We begin with the raw amino-acid sequence, 233 residues long: MNYSLIQISDCHIDDNKYSMGVNTHINLKKIISRISHINIDVLLITGDLTHKGSITSYKALQQMLYPIQIKLLIIPGNHDNKNNLSATFSKNLFSQFTLGKWEIININSVQVSKTSGFLTKDELIKLELNLAQSIAQYILITLHHPTVPMNSTWDDSLSLENPEALFNVLDKYHKIQAILFGHAHQAAEFKRLGVKIISCPSTALQFNNETRIGFNYYTLYDNGQLTINTQWI.

The Fe cation site is built by Asp-10, His-12, Asp-48, Asn-78, His-144, His-183, and His-185. AMP-binding positions include His-12, Asp-48, and 78–79 (NH). His-185 is a binding site for AMP.

It belongs to the cyclic nucleotide phosphodiesterase class-III family. It depends on Fe(2+) as a cofactor.

This Vesicomyosocius okutanii subsp. Calyptogena okutanii (strain HA) protein is Probable cyclic nucleotide phosphodiesterase COSY_0614.